We begin with the raw amino-acid sequence, 238 residues long: Ribosomal RNA small subunit methyltransferase E 1 (238 aa).

It belongs to the RNA methyltransferase RsmE family.

It localises to the cytoplasm. The enzyme catalyses uridine(1498) in 16S rRNA + S-adenosyl-L-methionine = N(3)-methyluridine(1498) in 16S rRNA + S-adenosyl-L-homocysteine + H(+). Its function is as follows. Specifically methylates the N3 position of the uracil ring of uridine 1498 (m3U1498) in 16S rRNA. Acts on the fully assembled 30S ribosomal subunit. The sequence is that of Ribosomal RNA small subunit methyltransferase E 1 (rsmE1) from Borreliella burgdorferi (strain ATCC 35210 / DSM 4680 / CIP 102532 / B31) (Borrelia burgdorferi).